An 893-amino-acid polypeptide reads, in one-letter code: Alpha-actinin-1 (893 aa).

The actin-binding stretch occupies residues 1–248 (MDHHYDPQQT…IMTYVSSFYH (248 aa)). The residue at position 13 (tyrosine 13) is a Phosphotyrosine; by FAK1. Calponin-homology (CH) domains follow at residues 32-136 (KQQR…LRFA) and 145-251 (TSAK…HAFS). 4 Spectrin repeats span residues 275–385 (QLME…WLLN), 395–500 (HLAE…ALER), 510–621 (QLYL…ALME), and 631–734 (RLRK…EVEN). 2 EF-hand domains span residues 747 to 782 (EQMNEFRASFNHFDRDHSGTLGPEEFKACLISLGYD) and 788 to 823 (QGEAEFARIMSIVDPNRMGVVTFQAFIDFMSRETAD). Aspartate 760, aspartate 762, serine 764, threonine 766, and glutamate 771 together coordinate Ca(2+).

This sequence belongs to the alpha-actinin family. Homodimer; antiparallel. Interacts with PDLIM4 (via PDZ domain).

Its subcellular location is the cytoplasm. The protein localises to the cytoskeleton. It is found in the myofibril. It localises to the sarcomere. The protein resides in the z line. Its subcellular location is the cell membrane. The protein localises to the cell junction. It is found in the cell projection. It localises to the ruffle. Its function is as follows. F-actin cross-linking protein is thought to anchor actin to a variety of intracellular structures. This is a bundling protein. The chain is Alpha-actinin-1 (ACTN1) from Gallus gallus (Chicken).